The chain runs to 904 residues: DNA mismatch repair protein MutS (904 aa).

Glycine 638–serine 645 contacts ATP. The tract at residues lysine 825–valine 869 is disordered.

This sequence belongs to the DNA mismatch repair MutS family.

In terms of biological role, this protein is involved in the repair of mismatches in DNA. It is possible that it carries out the mismatch recognition step. This protein has a weak ATPase activity. In Oleidesulfovibrio alaskensis (strain ATCC BAA-1058 / DSM 17464 / G20) (Desulfovibrio alaskensis), this protein is DNA mismatch repair protein MutS.